The sequence spans 265 residues: Eukaryotic translation initiation factor 3 subunit J (265 aa).

The interval 1–71 is disordered; it reads MSWDDEAING…KESSADRALL (71 aa). The segment covering 23 to 32 has biased composition (acidic residues); sequence WDAEIGDDEP. Over residues 42 to 71 the composition is skewed to basic and acidic residues; sequence EEKKPAPKPKKEQPKKVKKGKESSADRALL. S65 carries the phosphoserine modification. Position 75 is a phosphothreonine (T75). Phosphoserine is present on S92. Residues 219–265 are disordered; the sequence is VRGGTATGGAGKKKVKGKTNLGGAFKKDQDFDLDGPDDFEFGDDDFM. R220 bears the Omega-N-methylarginine mark. Residues 249 to 265 show a composition bias toward acidic residues; sequence FDLDGPDDFEFGDDDFM.

The protein belongs to the eIF-3 subunit J family. Probable component of the eukaryotic translation initiation factor 3 (eIF-3) complex. Is not part of the eIF-3 core complex, with which it is associated in substochiometric amounts.

Its subcellular location is the cytoplasm. Its function is as follows. Component of the eukaryotic translation initiation factor 3 (eIF-3) complex, which is involved in protein synthesis of a specialized repertoire of mRNAs and, together with other initiation factors, stimulates binding of mRNA and methionyl-tRNAi to the 40S ribosome. The eIF-3 complex specifically targets and initiates translation of a subset of mRNAs involved in cell proliferation. This is Eukaryotic translation initiation factor 3 subunit J from Saccharomyces cerevisiae (strain ATCC 204508 / S288c) (Baker's yeast).